The chain runs to 239 residues: Probable 2-phosphosulfolactate phosphatase (239 aa).

The protein belongs to the ComB family. Mg(2+) is required as a cofactor.

The catalysed reaction is (2R)-O-phospho-3-sulfolactate + H2O = (2R)-3-sulfolactate + phosphate. This Clostridium botulinum (strain Kyoto / Type A2) protein is Probable 2-phosphosulfolactate phosphatase.